Reading from the N-terminus, the 296-residue chain is 4-hydroxybenzoate octaprenyltransferase (296 aa).

8 consecutive transmembrane segments (helical) span residues 28-48 (PIGI…AGKG), 52-72 (LANI…GCVI), 102-122 (ALVF…CTNA), 146-166 (YYPQ…AFTA), 169-189 (GELP…TVGY), 219-239 (VIIL…GSKF), 241-261 (LGMW…WEFW), and 275-295 (FLHN…DYAL).

The protein belongs to the UbiA prenyltransferase family. It depends on Mg(2+) as a cofactor.

It localises to the cell inner membrane. It carries out the reaction all-trans-octaprenyl diphosphate + 4-hydroxybenzoate = 4-hydroxy-3-(all-trans-octaprenyl)benzoate + diphosphate. The protein operates within cofactor biosynthesis; ubiquinone biosynthesis. Catalyzes the prenylation of para-hydroxybenzoate (PHB) with an all-trans polyprenyl group. Mediates the second step in the final reaction sequence of ubiquinone-8 (UQ-8) biosynthesis, which is the condensation of the polyisoprenoid side chain with PHB, generating the first membrane-bound Q intermediate 3-octaprenyl-4-hydroxybenzoate. This is 4-hydroxybenzoate octaprenyltransferase from Pseudomonas fluorescens (strain Pf0-1).